A 384-amino-acid polypeptide reads, in one-letter code: 8-amino-7-oxononanoate synthase (384 aa).

Arg-21 contacts substrate. 108 to 109 provides a ligand contact to pyridoxal 5'-phosphate; the sequence is GF. Position 133 (His-133) interacts with substrate. Ser-179, His-207, and Thr-233 together coordinate pyridoxal 5'-phosphate. At Lys-236 the chain carries N6-(pyridoxal phosphate)lysine. Residue Thr-352 coordinates substrate.

Belongs to the class-II pyridoxal-phosphate-dependent aminotransferase family. BioF subfamily. In terms of assembly, homodimer. The cofactor is pyridoxal 5'-phosphate.

The enzyme catalyses 6-carboxyhexanoyl-[ACP] + L-alanine + H(+) = (8S)-8-amino-7-oxononanoate + holo-[ACP] + CO2. The protein operates within cofactor biosynthesis; biotin biosynthesis. Its function is as follows. Catalyzes the decarboxylative condensation of pimeloyl-[acyl-carrier protein] and L-alanine to produce 8-amino-7-oxononanoate (AON), [acyl-carrier protein], and carbon dioxide. This is 8-amino-7-oxononanoate synthase from Shigella dysenteriae serotype 1 (strain Sd197).